The sequence spans 192 residues: Nucleoside triphosphate pyrophosphatase (192 aa).

Asp-73 acts as the Proton acceptor in catalysis.

This sequence belongs to the Maf family. A divalent metal cation serves as cofactor.

The protein resides in the cytoplasm. The catalysed reaction is a ribonucleoside 5'-triphosphate + H2O = a ribonucleoside 5'-phosphate + diphosphate + H(+). It catalyses the reaction a 2'-deoxyribonucleoside 5'-triphosphate + H2O = a 2'-deoxyribonucleoside 5'-phosphate + diphosphate + H(+). Functionally, nucleoside triphosphate pyrophosphatase. May have a dual role in cell division arrest and in preventing the incorporation of modified nucleotides into cellular nucleic acids. This Ehrlichia ruminantium (strain Welgevonden) protein is Nucleoside triphosphate pyrophosphatase.